A 1865-amino-acid chain; its full sequence is Transcription initiation factor TFIID subunit 1 (1865 aa).

The interval 1–27 is disordered; that stretch reads MLLPATGASRSAAIMSDTDSDEDSSGG. The Protein kinase 1 domain maps to 1-409; the sequence is MLLPATGASR…VTQLHWEDDI (409 aa). Phosphoserine; by autocatalysis is present on S131. The tract at residues 144 to 199 is disordered; the sequence is EDIDCKLMPPPPPPPGPVKKEKDQDGLTGEKVDFSSSSDSESEMGPQEAAQAESKD. The span at 151-160 shows a compositional bias: pro residues; it reads MPPPPPPPGP. A compositionally biased stretch (basic and acidic residues) spans 161 to 176; the sequence is VKKEKDQDGLTGEKVD. At S302 the chain carries Phosphoserine; by autocatalysis. The disordered stretch occupies residues 509–530; sequence PDEKEEATSNSPSKENKKESSL. The tract at residues 512–971 is histone acetyltransferase (HAT); that stretch reads KEEATSNSPS…KIPNKPTQQK (460 aa). At K539 the chain carries N6-acetyllysine. Residues K544 and K557 each participate in a glycyl lysine isopeptide (Lys-Gly) (interchain with G-Cter in SUMO2) cross-link. Disordered stretches follow at residues 964–983 and 1228–1252; these read PNKP…KKTV and RLKR…MKER. 2 stretches are compositionally biased toward basic and acidic residues: residues 969–978 and 1228–1244; these read QQKDDKEPQP and RLKR…PPEK. The segment at residues 1190 to 1268 is a DNA-binding region (HMG box); it reads VRIRTTKDEE…CGACGAIGHM (79 aa). The tract at residues 1337–1624 is interaction with ASF1A and ASF1B; the sequence is VLKFPKQQLP…TAKEAALEEA (288 aa). Residues 1346-1353 carry the Nuclear localization signal motif; that stretch reads PPKKKRRV. 2 consecutive Bromo domains span residues 1371 to 1479 and 1493 to 1602; these read RRRT…LKEK and LLDD…LTEY. The Protein kinase 2 domain maps to 1420–1865; that stretch reads MDLQTLRENV…AGDSDMDSDE (446 aa). The segment at 1625–1865 is disordered; that stretch reads ELESLDPMTP…AGDSDMDSDE (241 aa). A compositionally biased stretch (pro residues) spans 1633-1642; that stretch reads TPGPYTPQPP. Residues 1646–1682 are compositionally biased toward polar residues; sequence DNSTSLSVSRDASVYQDESNMSVLDIPSATSEKQLTQ. 2 positions are modified to phosphoserine: S1664 and S1667. Acidic residues-rich tracts occupy residues 1683–1697 and 1715–1730; these read EGED…EEEG and EGED…EEGD. The segment covering 1739–1751 has biased composition (low complexity); that stretch reads SESGSDSDVGSGS. S1773, S1776, and S1794 each carry phosphoserine. Over residues 1804-1814 the composition is skewed to polar residues; sequence KSNTQDTSFSS. Over residues 1820–1829 the composition is skewed to acidic residues; that stretch reads VSEEEEDEEE. S1821 is subject to Phosphoserine. Positions 1832–1841 are enriched in polar residues; sequence SGPSVLSQVH.

Belongs to the TAF1 family. As to quaternary structure, component of the TFIID basal transcription factor complex, composed of TATA-box-binding protein TBP, and a number of TBP-associated factors (TAFs), including TAF1, TAF2, TAF3, TAF4, TAF5, TAF6, TAF7, TAF8, TAF9, TAF10, TAF11, TAF12 and TAF13. Interacts with TAF7; the interaction is direct. TAF1, when part of the TFIID complex, interacts with C-terminus of TP53. Part of a TFIID-containing RNA polymerase II pre-initiation complex that is composed of TBP and at least GTF2A1, GTF2A2, GTF2E1, GTF2E2, GTF2F1, GTF2H2, GTF2H3, GTF2H4, GTF2H5, GTF2B, TCEA1, ERCC2, ERCC3, TAF1, TAF2, TAF3, TAF4, TAF5, TAF6, TAF7, TAF8, TAF9, TAF10, TAF11, TAF12 and TAF13. Component of some MLL1/MLL complex, at least composed of the core components KMT2A/MLL1, ASH2L, HCFC1/HCF1, WDR5 and RBBP5, as well as the facultative components BACC1, CHD8, E2F6, HSP70, INO80C, KANSL1, LAS1L, MAX, MCRS1, MGA, KAT8/MOF, PELP1, PHF20, PRP31, RING2, RUVB1/TIP49A, RUVB2/TIP49B, SENP3, TAF1, TAF4, TAF6, TAF7, TAF9 and TEX10. RB1 interacts with the N-terminal domain of TAF1. Interacts with ASF1A and ASF1B. Interacts (via bromo domains) with acetylated lysine residues on the N-terminus of histone H1.4, H2A, H2B, H3 and H4 (in vitro). Mg(2+) serves as cofactor. Phosphorylated by casein kinase II in vitro.

The protein localises to the nucleus. It carries out the reaction L-seryl-[protein] + ATP = O-phospho-L-seryl-[protein] + ADP + H(+). The enzyme catalyses L-threonyl-[protein] + ATP = O-phospho-L-threonyl-[protein] + ADP + H(+). It catalyses the reaction L-lysyl-[protein] + acetyl-CoA = N(6)-acetyl-L-lysyl-[protein] + CoA + H(+). Its activity is regulated as follows. Autophosphorylates on Ser residues. Inhibited by retinoblastoma tumor suppressor protein, RB1. Binding to TAF1 or CIITA inhibits the histone acetyltransferase activity. Its function is as follows. The TFIID basal transcription factor complex plays a major role in the initiation of RNA polymerase II (Pol II)-dependent transcription. TFIID recognizes and binds promoters with or without a TATA box via its subunit TBP, a TATA-box-binding protein, and promotes assembly of the pre-initiation complex (PIC). The TFIID complex consists of TBP and TBP-associated factors (TAFs), including TAF1, TAF2, TAF3, TAF4, TAF5, TAF6, TAF7, TAF8, TAF9, TAF10, TAF11, TAF12 and TAF13. TAF1 is the largest component and core scaffold of the TFIID complex, involved in nucleating complex assembly. TAF1 forms a promoter DNA binding subcomplex of TFIID, together with TAF7 and TAF2. Contains novel N- and C-terminal Ser/Thr kinase domains which can autophosphorylate or transphosphorylate other transcription factors. Phosphorylates TP53 on 'Thr-55' which leads to MDM2-mediated degradation of TP53. Phosphorylates GTF2A1 and GTF2F1 on Ser residues. Possesses DNA-binding activity. Essential for progression of the G1 phase of the cell cycle. The sequence is that of Transcription initiation factor TFIID subunit 1 from Mesocricetus auratus (Golden hamster).